A 219-amino-acid chain; its full sequence is 7-cyano-7-deazaguanine synthase (219 aa).

10 to 20 (FSGGQDSTTCL) serves as a coordination point for ATP. The Zn(2+) site is built by cysteine 188, cysteine 197, cysteine 200, and cysteine 203.

The protein belongs to the QueC family. In terms of assembly, homodimer. Requires Zn(2+) as cofactor.

It catalyses the reaction 7-carboxy-7-deazaguanine + NH4(+) + ATP = 7-cyano-7-deazaguanine + ADP + phosphate + H2O + H(+). The protein operates within purine metabolism; 7-cyano-7-deazaguanine biosynthesis. Its function is as follows. Catalyzes the ATP-dependent conversion of 7-carboxy-7-deazaguanine (CDG) to 7-cyano-7-deazaguanine (preQ(0)). This Clostridium botulinum (strain 657 / Type Ba4) protein is 7-cyano-7-deazaguanine synthase.